The sequence spans 187 residues: dTTP/UTP pyrophosphatase (187 aa).

Asp-64 (proton acceptor) is an active-site residue.

This sequence belongs to the Maf family. YhdE subfamily. It depends on a divalent metal cation as a cofactor.

It is found in the cytoplasm. The catalysed reaction is dTTP + H2O = dTMP + diphosphate + H(+). It catalyses the reaction UTP + H2O = UMP + diphosphate + H(+). Its function is as follows. Nucleoside triphosphate pyrophosphatase that hydrolyzes dTTP and UTP. May have a dual role in cell division arrest and in preventing the incorporation of modified nucleotides into cellular nucleic acids. The chain is dTTP/UTP pyrophosphatase from Leptospira interrogans serogroup Icterohaemorrhagiae serovar Lai (strain 56601).